A 163-amino-acid polypeptide reads, in one-letter code: NADH-quinone oxidoreductase subunit I (163 aa).

4Fe-4S ferredoxin-type domains are found at residues 53–83 (LRRY…IEAG) and 94–123 (VRYD…EGPN). Positions 63, 66, 69, 73, 103, 106, 109, and 113 each coordinate [4Fe-4S] cluster.

Belongs to the complex I 23 kDa subunit family. NDH-1 is composed of 14 different subunits. Subunits NuoA, H, J, K, L, M, N constitute the membrane sector of the complex. Requires [4Fe-4S] cluster as cofactor.

Its subcellular location is the cell inner membrane. It catalyses the reaction a quinone + NADH + 5 H(+)(in) = a quinol + NAD(+) + 4 H(+)(out). NDH-1 shuttles electrons from NADH, via FMN and iron-sulfur (Fe-S) centers, to quinones in the respiratory chain. The immediate electron acceptor for the enzyme in this species is believed to be ubiquinone. Couples the redox reaction to proton translocation (for every two electrons transferred, four hydrogen ions are translocated across the cytoplasmic membrane), and thus conserves the redox energy in a proton gradient. In Brucella anthropi (strain ATCC 49188 / DSM 6882 / CCUG 24695 / JCM 21032 / LMG 3331 / NBRC 15819 / NCTC 12168 / Alc 37) (Ochrobactrum anthropi), this protein is NADH-quinone oxidoreductase subunit I.